The following is a 384-amino-acid chain: Putative dioxygenase SSO1533 (384 aa).

Positions 296, 302, and 332 each coordinate Fe cation.

Belongs to the homogentisate dioxygenase family. It depends on Fe cation as a cofactor.

This is Putative dioxygenase SSO1533 from Saccharolobus solfataricus (strain ATCC 35092 / DSM 1617 / JCM 11322 / P2) (Sulfolobus solfataricus).